Consider the following 342-residue polypeptide: Holliday junction branch migration complex subunit RuvB (342 aa).

The segment at 1 to 179 is large ATPase domain (RuvB-L); the sequence is MTSILSPEKS…FGIPMRLNFY (179 aa). Residues Leu-18, Arg-19, Gly-60, Lys-63, Thr-64, Thr-65, 126–128, Arg-169, Tyr-179, and Arg-216 each bind ATP; that span reads EDF. Residue Thr-64 coordinates Mg(2+). The small ATPAse domain (RuvB-S) stretch occupies residues 180–250; the sequence is NTEELKKVLN…IANFGLNRLE (71 aa). Positions 253 to 342 are head domain (RuvB-H); that stretch reads IIGLDSNDYR…HQFNIFNDNE (90 aa). 3 residues coordinate DNA: Arg-289, Arg-308, and Arg-313.

It belongs to the RuvB family. Homohexamer. Forms an RuvA(8)-RuvB(12)-Holliday junction (HJ) complex. HJ DNA is sandwiched between 2 RuvA tetramers; dsDNA enters through RuvA and exits via RuvB. An RuvB hexamer assembles on each DNA strand where it exits the tetramer. Each RuvB hexamer is contacted by two RuvA subunits (via domain III) on 2 adjacent RuvB subunits; this complex drives branch migration. In the full resolvosome a probable DNA-RuvA(4)-RuvB(12)-RuvC(2) complex forms which resolves the HJ.

The protein resides in the cytoplasm. The catalysed reaction is ATP + H2O = ADP + phosphate + H(+). The RuvA-RuvB-RuvC complex processes Holliday junction (HJ) DNA during genetic recombination and DNA repair, while the RuvA-RuvB complex plays an important role in the rescue of blocked DNA replication forks via replication fork reversal (RFR). RuvA specifically binds to HJ cruciform DNA, conferring on it an open structure. The RuvB hexamer acts as an ATP-dependent pump, pulling dsDNA into and through the RuvAB complex. RuvB forms 2 homohexamers on either side of HJ DNA bound by 1 or 2 RuvA tetramers; 4 subunits per hexamer contact DNA at a time. Coordinated motions by a converter formed by DNA-disengaged RuvB subunits stimulates ATP hydrolysis and nucleotide exchange. Immobilization of the converter enables RuvB to convert the ATP-contained energy into a lever motion, pulling 2 nucleotides of DNA out of the RuvA tetramer per ATP hydrolyzed, thus driving DNA branch migration. The RuvB motors rotate together with the DNA substrate, which together with the progressing nucleotide cycle form the mechanistic basis for DNA recombination by continuous HJ branch migration. Branch migration allows RuvC to scan DNA until it finds its consensus sequence, where it cleaves and resolves cruciform DNA. This is Holliday junction branch migration complex subunit RuvB from Rickettsia bellii (strain RML369-C).